We begin with the raw amino-acid sequence, 1129 residues long: MSGRDLELTLDRVSSIEYPALVKEAFLNNWHASAHRSEVTSNCASLNDRYCWVLSRNQIFIWERAKSSHRAIIPTQLPLPTSGLPRSVKCVVVYDGVHRGANKTPCPGILVVSPEGVLRHWTSIESQTYIEEVLDINNEVALRVELTDEPIDGKSASFLLTTTSGTVYFLNGKGQDSAKTGALECNKVAGREAHGFRRRLSSIMFGGESKESTSLITNSFQHQSKDLLVVTVSPDVLTVYNMYTPCELWSLKTKEFFQPKIASFFEADLKRTPLKVRARLIDAAVFRDGLMILIGGTHEESQSVHMFMVWMSANWQTEQPTGVVWSARVPMNEHRALFSKIDDSIYSNLTLCIPKNTAESKKADRTDGIIIINPYFAVSLYLPFDLAKPKKPESLYRHVSIPPRDQLLGYAICSQYVYIMMLESGVSTIRLLPRGFADSSIYTHEQVVVPSLSVGTDDWPILSELLSEMVASGLPKTPLYQSLHRAFELFAEKHMAESEEELKAIIKMPDQEIARIVSQFLYAIIDYSDAANKTDTELHAKRVLTSRIMLFLKHMGVYERIISSPLGISRGGILSLRVGGTMLGEVSERVAASTAIWTWKTSNETNSAVFDAIIEKVLRIPEVQDLGLKDKDALFGRCGLVHHIPVVAAQQLEKNVIGKTKSHRFEVFHAVCELLSGIKETIISWRNCRTKVAIPKFPIWWTLETFASCYRDVAEKIIEELKNGSSTDSERARLLMYILSIYDFYLSESDSQPDNDKVLQEMIALGKPADAMELAEKHKDFGTLVKNYLTTDVGTRQKTFERYKKMFEKDDFEMYLCDYLKEHGRNDVLLQQGGSRVDAYLDNFKELRYSREIANKQFGKAALTLMSLADAETKSFSKFVEFLTRAYYCACSSIDGTDVSEVLDFYKRRYPEMKHRKRIPTEILKICFGNDLDAMMSVEDMLEWNMAVQPNDEASVEGFARAFHLLADLLAVHPDSDELKKKIDKTWKALVDYDEWNRVRSKEDVEKKTIFGKFCNYLINSYPADKGDSFPIWMPISRRLIFPTDIDTVLDECIANTTGNHLSWIKGHLKWIGEQLCKQALLPKSAFFRPDMKQVGSISQAALEAFGPILQRREQRFIDQLNRDSMMET.

It belongs to the nucleoporin Nup133 family.

The protein localises to the nucleus envelope. The protein resides in the nucleus. Its subcellular location is the nuclear pore complex. Important for early nematode development. This Caenorhabditis elegans protein is Nuclear pore complex protein 15.